The primary structure comprises 63 residues: Large ribosomal subunit protein bL35 (63 aa).

The interval 26 to 50 (GSGMRHNLEHKSARKRRALKRDDVL) is disordered.

This sequence belongs to the bacterial ribosomal protein bL35 family.

This is Large ribosomal subunit protein bL35 from Bifidobacterium animalis subsp. lactis (strain AD011).